The primary structure comprises 349 residues: UDP-3-O-acylglucosamine N-acyltransferase (349 aa).

Histidine 243 (proton acceptor) is an active-site residue.

It belongs to the transferase hexapeptide repeat family. LpxD subfamily. As to quaternary structure, homotrimer.

The catalysed reaction is a UDP-3-O-[(3R)-3-hydroxyacyl]-alpha-D-glucosamine + a (3R)-hydroxyacyl-[ACP] = a UDP-2-N,3-O-bis[(3R)-3-hydroxyacyl]-alpha-D-glucosamine + holo-[ACP] + H(+). It participates in bacterial outer membrane biogenesis; LPS lipid A biosynthesis. Its function is as follows. Catalyzes the N-acylation of UDP-3-O-acylglucosamine using 3-hydroxyacyl-ACP as the acyl donor. Is involved in the biosynthesis of lipid A, a phosphorylated glycolipid that anchors the lipopolysaccharide to the outer membrane of the cell. In Myxococcus xanthus (strain DK1622), this protein is UDP-3-O-acylglucosamine N-acyltransferase.